Reading from the N-terminus, the 376-residue chain is Alanine racemase (376 aa).

Lys40 serves as the catalytic Proton acceptor; specific for D-alanine. Residue Lys40 is modified to N6-(pyridoxal phosphate)lysine. Arg138 is a binding site for substrate. The Proton acceptor; specific for L-alanine role is filled by Tyr270. Met317 is a substrate binding site.

It belongs to the alanine racemase family. Pyridoxal 5'-phosphate is required as a cofactor.

The enzyme catalyses L-alanine = D-alanine. The protein operates within amino-acid biosynthesis; D-alanine biosynthesis; D-alanine from L-alanine: step 1/1. Functionally, catalyzes the interconversion of L-alanine and D-alanine. May also act on other amino acids. The chain is Alanine racemase (alr) from Lactobacillus delbrueckii subsp. bulgaricus (strain ATCC 11842 / DSM 20081 / BCRC 10696 / JCM 1002 / NBRC 13953 / NCIMB 11778 / NCTC 12712 / WDCM 00102 / Lb 14).